The following is a 500-amino-acid chain: NAD(P)H-quinone oxidoreductase chain 4, chloroplastic (500 aa).

Transmembrane regions (helical) follow at residues 4–24, 37–57, 87–107, 113–130, 134–154, 167–187, 211–231, 242–262, 272–292, 313–333, 334–354, 386–406, 417–437, and 462–482; these read FPWL…IFFL, ISIC…HFQL, VGSI…AWPV, LFYF…GLFS, LLLF…LLSM, FILY…GMGL, ILLY…IPLH, HYST…YGLI, AHYL…IYAA, MGFI…GAIL, QILS…TASD, LALP…GLIT, LITF…LSML, and LFIL…PDLV.

The protein belongs to the complex I subunit 4 family.

The protein resides in the plastid. It localises to the chloroplast thylakoid membrane. The catalysed reaction is a plastoquinone + NADH + (n+1) H(+)(in) = a plastoquinol + NAD(+) + n H(+)(out). The enzyme catalyses a plastoquinone + NADPH + (n+1) H(+)(in) = a plastoquinol + NADP(+) + n H(+)(out). This Agrostis stolonifera (Creeping bentgrass) protein is NAD(P)H-quinone oxidoreductase chain 4, chloroplastic.